Reading from the N-terminus, the 225-residue chain is Thymidylate kinase (225 aa).

9–16 (GIEGCGKT) lines the ATP pocket.

Belongs to the thymidylate kinase family.

It carries out the reaction dTMP + ATP = dTDP + ADP. In terms of biological role, phosphorylation of dTMP to form dTDP in both de novo and salvage pathways of dTTP synthesis. This is Thymidylate kinase from Geobacter sp. (strain M21).